The following is a 503-amino-acid chain: Probable cytosol aminopeptidase (503 aa).

Residues lysine 268 and aspartate 273 each contribute to the Mn(2+) site. Lysine 280 is a catalytic residue. Mn(2+) contacts are provided by aspartate 291, aspartate 350, and glutamate 352. Arginine 354 is an active-site residue.

It belongs to the peptidase M17 family. It depends on Mn(2+) as a cofactor.

It localises to the cytoplasm. It catalyses the reaction Release of an N-terminal amino acid, Xaa-|-Yaa-, in which Xaa is preferably Leu, but may be other amino acids including Pro although not Arg or Lys, and Yaa may be Pro. Amino acid amides and methyl esters are also readily hydrolyzed, but rates on arylamides are exceedingly low.. The enzyme catalyses Release of an N-terminal amino acid, preferentially leucine, but not glutamic or aspartic acids.. Functionally, presumably involved in the processing and regular turnover of intracellular proteins. Catalyzes the removal of unsubstituted N-terminal amino acids from various peptides. In Methylobacterium radiotolerans (strain ATCC 27329 / DSM 1819 / JCM 2831 / NBRC 15690 / NCIMB 10815 / 0-1), this protein is Probable cytosol aminopeptidase.